The chain runs to 249 residues: Hydantoin racemase (249 aa).

The protein belongs to the HyuE racemase family. Homohexamer.

It catalyses the reaction a D-5-monosubstituted hydantoin = a L-5-monosubstituted hydantoin. It carries out the reaction D-5-[2-(methylsulfanyl)ethyl]hydantoin = L-5-[2-(methysulfanyl)ethyl]hydantoin. The catalysed reaction is D-5-benzylhydantoin = L-5-benzylhydantoin. The enzyme catalyses D-5-isopropylhydantoin = L-5-isopropylhydantoin. It catalyses the reaction D-5-isobutylhydantoin = L-5-isobutylhydantoin. Its activity is regulated as follows. Strongly inhibited by Cu(2+) and Zn(2+). Slightly stimulated by the addition of Mn(2+) or Co(2+), but also by metal-chelating agents such as EDTA or EGTA, indicating that the enzyme is not a metalloenzyme. Involved in the asymmetric conversion of racemic 5-substituted hydantoins to the corresponding L-amino acids. Catalyzes the racemization via enolization of D- and L-5-monosubstituted hydantoins. Is able to racemize 5-substituted hydantoins having aromatic or aliphatic substituents such as 5-(2-methylthioethyl)hydantoin, 5-isopropylhydantoin, 5-isobutylhydantoin and 5-benzylhydantoin. The polypeptide is Hydantoin racemase (Pseudomonas sp. (strain NS671)).